The chain runs to 411 residues: Serine hydroxymethyltransferase (411 aa).

Position 120 to 122 (120 to 122 (GHL)) interacts with (6S)-5,6,7,8-tetrahydrofolate. Lys225 bears the N6-(pyridoxal phosphate)lysine mark. Residues Glu241 and 350–352 (SPF) each bind (6S)-5,6,7,8-tetrahydrofolate.

It belongs to the SHMT family. Homodimer. The cofactor is pyridoxal 5'-phosphate.

The protein resides in the cytoplasm. The enzyme catalyses (6R)-5,10-methylene-5,6,7,8-tetrahydrofolate + glycine + H2O = (6S)-5,6,7,8-tetrahydrofolate + L-serine. Its pathway is one-carbon metabolism; tetrahydrofolate interconversion. It participates in amino-acid biosynthesis; glycine biosynthesis; glycine from L-serine: step 1/1. In terms of biological role, catalyzes the reversible interconversion of serine and glycine with tetrahydrofolate (THF) serving as the one-carbon carrier. This reaction serves as the major source of one-carbon groups required for the biosynthesis of purines, thymidylate, methionine, and other important biomolecules. Also exhibits THF-independent aldolase activity toward beta-hydroxyamino acids, producing glycine and aldehydes, via a retro-aldol mechanism. The polypeptide is Serine hydroxymethyltransferase (Limosilactobacillus fermentum (strain NBRC 3956 / LMG 18251) (Lactobacillus fermentum)).